Consider the following 123-residue polypeptide: DNA-directed RNA polymerase subunit omega (123 aa).

Residues 72-100 (QRVLPSEDEEDAAREERGQQMEALPAPPV) form a disordered region.

This sequence belongs to the RNA polymerase subunit omega family. As to quaternary structure, the RNAP catalytic core consists of 2 alpha, 1 beta, 1 beta' and 1 omega subunit. When a sigma factor is associated with the core the holoenzyme is formed, which can initiate transcription.

It catalyses the reaction RNA(n) + a ribonucleoside 5'-triphosphate = RNA(n+1) + diphosphate. In terms of biological role, promotes RNA polymerase assembly. Latches the N- and C-terminal regions of the beta' subunit thereby facilitating its interaction with the beta and alpha subunits. The sequence is that of DNA-directed RNA polymerase subunit omega from Maricaulis maris (strain MCS10) (Caulobacter maris).